A 304-amino-acid chain; its full sequence is Small glutamine-rich tetratricopeptide repeat-containing protein beta (304 aa).

TPR repeat units follow at residues 15–49 (LREQ…SPED), 85–118 (ADQL…DPNN), 120–152 (VYYC…DSKY), and 153–186 (SKAY…DPEN). Lysine 131 carries the N6-acetyllysine modification. Serine 293, serine 295, and serine 297 each carry phosphoserine.

It belongs to the SGT family. As to quaternary structure, homooligomerize.

Functionally, co-chaperone that binds directly to HSC70 and HSP70 and regulates their ATPase activity. This Mus musculus (Mouse) protein is Small glutamine-rich tetratricopeptide repeat-containing protein beta (Sgtb).